The chain runs to 1105 residues: Lysylphosphatidylglycerol biosynthesis bifunctional protein LysX (1105 aa).

Residues 1-603 form a phosphatidylglycerol lysyltransferase region; sequence MTVTKPRSVQ…LLHHDGSAPD (603 aa). 7 consecutive transmembrane segments (helical) span residues 20 to 40, 62 to 82, 86 to 106, 117 to 137, 154 to 174, 186 to 203, and 208 to 228; these read VPAA…LASI, FPDT…ALAA, IAWL…AADI, FGEN…VLGY, AVLV…VDLF, YVAN…DLFT, and VFLN…ATIV. The tract at residues 604–1105 is lysine--tRNA ligase; sequence VSGLRQSAIA…TLPFPLAKPH (502 aa). Mg(2+)-binding residues include Asp-1017 and Glu-1024.

It in the N-terminal section; belongs to the LPG synthetase family. This sequence in the C-terminal section; belongs to the class-II aminoacyl-tRNA synthetase family. Mg(2+) is required as a cofactor.

Its subcellular location is the cell membrane. The enzyme catalyses tRNA(Lys) + L-lysine + ATP = L-lysyl-tRNA(Lys) + AMP + diphosphate. It carries out the reaction L-lysyl-tRNA(Lys) + a 1,2-diacyl-sn-glycero-3-phospho-(1'-sn-glycerol) = a 1,2-diacyl-sn-glycero-3-phospho-1'-(3'-O-L-lysyl)-sn-glycerol + tRNA(Lys). Catalyzes the production of L-lysyl-tRNA(Lys)transfer and the transfer of a lysyl group from L-lysyl-tRNA(Lys) to membrane-bound phosphatidylglycerol (PG), which produces lysylphosphatidylglycerol (LPG), one of the components of the bacterial membrane with a positive net charge. LPG synthesis contributes to the resistance to cationic antimicrobial peptides (CAMPs) and likely protects M.tuberculosis against the CAMPs produced by competiting microorganisms (bacteriocins). In fact, the modification of anionic phosphatidylglycerol with positively charged L-lysine results in repulsion of the peptides. In Mycobacterium ulcerans (strain Agy99), this protein is Lysylphosphatidylglycerol biosynthesis bifunctional protein LysX (lysX).